Here is a 541-residue protein sequence, read N- to C-terminus: Putative asparagine synthetase [glutamine-hydrolyzing] 1 (541 aa).

The active-site For GATase activity is the Cys2. The Glutamine amidotransferase type-2 domain maps to 2–213 (CSISGIIVKD…PNSQLIYYLD (212 aa)). L-glutamine-binding positions include 68-72 (RLAIV), 92-94 (NGE), and Asp116. ATP-binding positions include Val289 and 363-364 (SG).

This sequence belongs to the asparagine synthetase family.

The catalysed reaction is L-aspartate + L-glutamine + ATP + H2O = L-asparagine + L-glutamate + AMP + diphosphate + H(+). Its pathway is amino-acid biosynthesis; L-asparagine biosynthesis; L-asparagine from L-aspartate (L-Gln route): step 1/1. In Methanocaldococcus jannaschii (strain ATCC 43067 / DSM 2661 / JAL-1 / JCM 10045 / NBRC 100440) (Methanococcus jannaschii), this protein is Putative asparagine synthetase [glutamine-hydrolyzing] 1.